An 84-amino-acid polypeptide reads, in one-letter code: Mitochondrial import inner membrane translocase subunit tim9 (84 aa).

The Twin CX3C motif motif lies at 35–59 (CFSDCVQDFTSSKLSNKESECIAKC). Cystine bridges form between Cys35–Cys59 and Cys39–Cys55.

It belongs to the small Tim family. In terms of assembly, heterohexamer; composed of 3 copies of TIM9 and 3 copies of TIM10, named soluble 70 kDa complex. Associates with the TIM22 complex, whose core is composed of TIM22 and TIM54. Interacts with the transmembrane regions of multi-pass transmembrane proteins in transit.

The protein resides in the mitochondrion inner membrane. Mitochondrial intermembrane chaperone that participates in the import and insertion of multi-pass transmembrane proteins into the mitochondrial inner membrane. Also required for the transfer of beta-barrel precursors from the TOM complex to the sorting and assembly machinery (SAM complex) of the outer membrane. Acts as a chaperone-like protein that protects the hydrophobic precursors from aggregation and guide them through the mitochondrial intermembrane space. This Schizosaccharomyces pombe (strain 972 / ATCC 24843) (Fission yeast) protein is Mitochondrial import inner membrane translocase subunit tim9 (tim9).